We begin with the raw amino-acid sequence, 277 residues long: S-formylglutathione hydrolase FrmB (277 aa).

Catalysis depends on charge relay system residues S145, D221, and H254.

It belongs to the esterase D family.

It carries out the reaction S-formylglutathione + H2O = formate + glutathione + H(+). Its function is as follows. Serine hydrolase involved in the detoxification of formaldehyde. Hydrolyzes S-formylglutathione to glutathione and formate. The polypeptide is S-formylglutathione hydrolase FrmB (frmB) (Escherichia coli (strain K12 / DH10B)).